An 856-amino-acid polypeptide reads, in one-letter code: Protein phosphatase 2C 32 (856 aa).

Ser-152, Ser-189, and Ser-201 each carry phosphoserine. The region spanning 269 to 835 (ESCLESNRNL…DDVSVMVVSL (567 aa)) is the PPM-type phosphatase domain. The Mn(2+) site is built by Asp-307 and Gly-308. Disordered regions lie at residues 340–373 (PSED…KSVV), 388–407 (GNTD…GPGK), and 446–485 (NPST…QISS). Low complexity predominate over residues 395–407 (ADGPPGDSAGPGK). A compositionally biased stretch (polar residues) spans 471–485 (NSGQRHGTKKSQISS). Mn(2+)-binding residues include Asp-763 and Asp-826.

This sequence belongs to the PP2C family. It depends on Mg(2+) as a cofactor. Requires Mn(2+) as cofactor. As to expression, expressed in roots, leaves, stems, inflorescences, flowers and throughout the shoot meristem.

It localises to the nucleus. It carries out the reaction O-phospho-L-seryl-[protein] + H2O = L-seryl-[protein] + phosphate. The enzyme catalyses O-phospho-L-threonyl-[protein] + H2O = L-threonyl-[protein] + phosphate. Its activity is regulated as follows. Insensitive to okadaic acid. Involved in the regulation of pedicel length and of CLAVATA pathways controlling stem cell identity at shoot and flower meristems. The polypeptide is Protein phosphatase 2C 32 (POL) (Arabidopsis thaliana (Mouse-ear cress)).